A 360-amino-acid chain; its full sequence is Plastid lipid-associated protein 3, chloroplastic (360 aa).

The segment covering 1–37 (MATLFTVTTTSRPFPANPSKTFSPSISLKPNALSFSL) has biased composition (polar residues). Residues 1–52 (MATLFTVTTTSRPFPANPSKTFSPSISLKPNALSFSLTHHRPPRPLRFSKIR) constitute a chloroplast transit peptide. A disordered region spans residues 1–130 (MATLFTVTTT…EWEEREADDG (130 aa)). Residues 38-50 (THHRPPRPLRFSK) show a composition bias toward basic residues. The span at 53–68 (SSLPSESDSEPEGGYS) shows a compositional bias: low complexity. Positions 117-127 (TNEDEWEEREA) are enriched in acidic residues.

Belongs to the PAP/fibrillin family. Ubiquitous expression among various organs, but only at a very low level.

It localises to the plastid. Its subcellular location is the chloroplast. The polypeptide is Plastid lipid-associated protein 3, chloroplastic (PAP3) (Brassica campestris (Field mustard)).